We begin with the raw amino-acid sequence, 569 residues long: Proline--tRNA ligase (569 aa).

This sequence belongs to the class-II aminoacyl-tRNA synthetase family. ProS type 1 subfamily. Homodimer.

The protein localises to the cytoplasm. The catalysed reaction is tRNA(Pro) + L-proline + ATP = L-prolyl-tRNA(Pro) + AMP + diphosphate. Its function is as follows. Catalyzes the attachment of proline to tRNA(Pro) in a two-step reaction: proline is first activated by ATP to form Pro-AMP and then transferred to the acceptor end of tRNA(Pro). As ProRS can inadvertently accommodate and process non-cognate amino acids such as alanine and cysteine, to avoid such errors it has two additional distinct editing activities against alanine. One activity is designated as 'pretransfer' editing and involves the tRNA(Pro)-independent hydrolysis of activated Ala-AMP. The other activity is designated 'posttransfer' editing and involves deacylation of mischarged Ala-tRNA(Pro). The misacylated Cys-tRNA(Pro) is not edited by ProRS. The chain is Proline--tRNA ligase from Dehalococcoides mccartyi (strain ATCC BAA-2100 / JCM 16839 / KCTC 5957 / BAV1).